Here is a 919-residue protein sequence, read N- to C-terminus: Probable disease resistance protein At4g27220 (919 aa).

2 coiled-coil regions span residues 1 to 30 (MFRSNARALNRALERLKNVQTKVNEALKRS) and 74 to 95 (VEILEKVKRLEEQGQDLIKKIS). The region spanning 121 to 399 (MLDKLKDCLK…AEGLLDGQHH (279 aa)) is the NB-ARC domain. 141–148 (GMGGVGKT) contributes to the ATP binding site. LRR repeat units follow at residues 447-468 (GEGFHSLVMAGRGLIEFPQDKF), 469-492 (VSSVQRVSLMANKLERLPNNVIEG), 494-516 (ETLVLLLQGNSHVKEVPNGFLQA), 519-540 (NLRILDLSGVRIRTLPDSFSNL), 542-564 (SLRSLVLRNCKKLRNLPSLESLV), 565-587 (KLQFLDLHESAIRELPRGLEALS), 588-610 (SLRYICVSNTYQLQSIPAGTILQ), and 611-635 (LSSLEVLDMAGSAYSWGIKGEEREG).

It belongs to the disease resistance NB-LRR family.

In terms of biological role, probable disease resistance protein. This is Probable disease resistance protein At4g27220 from Arabidopsis thaliana (Mouse-ear cress).